The following is a 187-amino-acid chain: Elongation factor P (187 aa).

Residue Lys-34 is modified to N6-(3,6-diaminohexanoyl)-5-hydroxylysine.

It belongs to the elongation factor P family. In terms of processing, may be beta-lysylated on the epsilon-amino group of Lys-34 by the combined action of EpmA and EpmB, and then hydroxylated on the C5 position of the same residue by EpmC (if this protein is present). Lysylation is critical for the stimulatory effect of EF-P on peptide-bond formation. The lysylation moiety may extend toward the peptidyltransferase center and stabilize the terminal 3-CCA end of the tRNA. Hydroxylation of the C5 position on Lys-34 may allow additional potential stabilizing hydrogen-bond interactions with the P-tRNA.

The protein resides in the cytoplasm. It participates in protein biosynthesis; polypeptide chain elongation. In terms of biological role, involved in peptide bond synthesis. Alleviates ribosome stalling that occurs when 3 or more consecutive Pro residues or the sequence PPG is present in a protein, possibly by augmenting the peptidyl transferase activity of the ribosome. Modification of Lys-34 is required for alleviation. The chain is Elongation factor P from Vesicomyosocius okutanii subsp. Calyptogena okutanii (strain HA).